We begin with the raw amino-acid sequence, 492 residues long: Cysteine--tRNA ligase (492 aa).

Zn(2+) is bound at residue cysteine 29. The short motif at 31–41 (PTVYDYAHIGN) is the 'HIGH' region element. 3 residues coordinate Zn(2+): cysteine 222, histidine 247, and glutamate 251. The 'KMSKS' region signature appears at 279–283 (KMSKS). Lysine 282 is a binding site for ATP.

The protein belongs to the class-I aminoacyl-tRNA synthetase family. In terms of assembly, monomer. The cofactor is Zn(2+).

The protein localises to the cytoplasm. It carries out the reaction tRNA(Cys) + L-cysteine + ATP = L-cysteinyl-tRNA(Cys) + AMP + diphosphate. The protein is Cysteine--tRNA ligase of Treponema denticola (strain ATCC 35405 / DSM 14222 / CIP 103919 / JCM 8153 / KCTC 15104).